Consider the following 448-residue polypeptide: Trigger factor (448 aa).

A PPIase FKBP-type domain is found at 172-257 (GDRVTVDFVG…MKKIEWPHLP (86 aa)).

This sequence belongs to the FKBP-type PPIase family. Tig subfamily.

It localises to the cytoplasm. The catalysed reaction is [protein]-peptidylproline (omega=180) = [protein]-peptidylproline (omega=0). In terms of biological role, involved in protein export. Acts as a chaperone by maintaining the newly synthesized protein in an open conformation. Functions as a peptidyl-prolyl cis-trans isomerase. This is Trigger factor from Burkholderia cenocepacia (strain HI2424).